The following is a 419-amino-acid chain: Phospho-N-acetylmuramoyl-pentapeptide-transferase (419 aa).

The next 10 membrane-spanning stretches (helical) occupy residues 22-42, 72-92, 99-119, 135-155, 208-228, 238-258, 278-298, 303-323, 328-348, and 396-416; these read YVSF…TVIG, TPTM…LLLA, ILLM…DDYI, IIGQ…NPAV, VLFG…FISN, GLAT…AYVS, LTIF…YNAY, FMGD…ALII, LLPI…IQVF, and KITV…IATL.

It belongs to the glycosyltransferase 4 family. MraY subfamily. The cofactor is Mg(2+).

It localises to the cell inner membrane. The catalysed reaction is UDP-N-acetyl-alpha-D-muramoyl-L-alanyl-gamma-D-glutamyl-meso-2,6-diaminopimeloyl-D-alanyl-D-alanine + di-trans,octa-cis-undecaprenyl phosphate = di-trans,octa-cis-undecaprenyl diphospho-N-acetyl-alpha-D-muramoyl-L-alanyl-D-glutamyl-meso-2,6-diaminopimeloyl-D-alanyl-D-alanine + UMP. Its pathway is cell wall biogenesis; peptidoglycan biosynthesis. Functionally, catalyzes the initial step of the lipid cycle reactions in the biosynthesis of the cell wall peptidoglycan: transfers peptidoglycan precursor phospho-MurNAc-pentapeptide from UDP-MurNAc-pentapeptide onto the lipid carrier undecaprenyl phosphate, yielding undecaprenyl-pyrophosphoryl-MurNAc-pentapeptide, known as lipid I. This is Phospho-N-acetylmuramoyl-pentapeptide-transferase from Porphyromonas gingivalis (strain ATCC 33277 / DSM 20709 / CIP 103683 / JCM 12257 / NCTC 11834 / 2561).